Consider the following 89-residue polypeptide: uncharacterized protein (89 aa).

The chain crosses the membrane as a helical span at residues 28-50; sequence LYLDLGFSALLFYNSNLLFSFIL.

It is found in the membrane. This is an uncharacterized protein from Archaeoglobus fulgidus (strain ATCC 49558 / DSM 4304 / JCM 9628 / NBRC 100126 / VC-16).